Consider the following 197-residue polypeptide: Large ribosomal subunit protein bL25 (197 aa).

Belongs to the bacterial ribosomal protein bL25 family. CTC subfamily. Part of the 50S ribosomal subunit; part of the 5S rRNA/L5/L18/L25 subcomplex. Contacts the 5S rRNA. Binds to the 5S rRNA independently of L5 and L18.

Its function is as follows. This is one of the proteins that binds to the 5S RNA in the ribosome where it forms part of the central protuberance. This Hydrogenobaculum sp. (strain Y04AAS1) protein is Large ribosomal subunit protein bL25.